We begin with the raw amino-acid sequence, 184 residues long: Putative DNA-directed RNA polymerase subunit 454R (184 aa).

Belongs to the archaeal Rpo5/eukaryotic RPB5 RNA polymerase subunit family.

In terms of biological role, component of the DNA-dependent RNA polymerase that catalyzes the transcription in the cytoplasm of viral DNA into RNA using the four ribonucleoside triphosphates as substrates. In Invertebrate iridescent virus 6 (IIV-6), this protein is Putative DNA-directed RNA polymerase subunit 454R.